Here is a 372-residue protein sequence, read N- to C-terminus: Pyruvylated Gal-beta-1,3-epitope synthesis protein 5 (372 aa).

The Cytoplasmic portion of the chain corresponds to 1–12; it reads MGLPLRIFAGNG. Residues 13–35 traverse the membrane as a helical; Signal-anchor for type II membrane protein segment; that stretch reads IGGWCLRLFLFGSLILLLRPLIF. The Lumenal portion of the chain corresponds to 36–372; it reads YSNTTMKKLK…LRIIEQWKQL (337 aa). N-linked (GlcNAc...) asparagine glycosylation is found at N38 and N128.

It is found in the golgi apparatus membrane. Its function is as follows. Involved in cell wall biogenesis. Has a role in the addition of Gal-beta1,3 moeities to galactomannans and their subsequent pyruvylation. Has a role in meiosis. In Schizosaccharomyces pombe (strain 972 / ATCC 24843) (Fission yeast), this protein is Pyruvylated Gal-beta-1,3-epitope synthesis protein 5 (pvg5).